Reading from the N-terminus, the 298-residue chain is Ribosomal RNA small subunit methyltransferase A (298 aa).

6 residues coordinate S-adenosyl-L-methionine: Asn35, Leu37, Gly62, Glu83, Asp108, and Asn133.

The protein belongs to the class I-like SAM-binding methyltransferase superfamily. rRNA adenine N(6)-methyltransferase family. RsmA subfamily.

The protein localises to the cytoplasm. The catalysed reaction is adenosine(1518)/adenosine(1519) in 16S rRNA + 4 S-adenosyl-L-methionine = N(6)-dimethyladenosine(1518)/N(6)-dimethyladenosine(1519) in 16S rRNA + 4 S-adenosyl-L-homocysteine + 4 H(+). Its function is as follows. Specifically dimethylates two adjacent adenosines (A1518 and A1519) in the loop of a conserved hairpin near the 3'-end of 16S rRNA in the 30S particle. May play a critical role in biogenesis of 30S subunits. The protein is Ribosomal RNA small subunit methyltransferase A of Streptococcus pyogenes serotype M4 (strain MGAS10750).